Reading from the N-terminus, the 136-residue chain is Large ribosomal subunit protein uL16 (136 aa).

The protein belongs to the universal ribosomal protein uL16 family. Part of the 50S ribosomal subunit.

Binds 23S rRNA and is also seen to make contacts with the A and possibly P site tRNAs. The sequence is that of Large ribosomal subunit protein uL16 from Shewanella denitrificans (strain OS217 / ATCC BAA-1090 / DSM 15013).